Consider the following 717-residue polypeptide: Glycine--tRNA ligase beta subunit (717 aa).

This sequence belongs to the class-II aminoacyl-tRNA synthetase family. In terms of assembly, tetramer of two alpha and two beta subunits.

The protein localises to the cytoplasm. The catalysed reaction is tRNA(Gly) + glycine + ATP = glycyl-tRNA(Gly) + AMP + diphosphate. This is Glycine--tRNA ligase beta subunit from Gloeothece citriformis (strain PCC 7424) (Cyanothece sp. (strain PCC 7424)).